The following is a 118-amino-acid chain: Acidic phospholipase A2 homolog (118 aa).

7 disulfides stabilise this stretch: cysteine 11-cysteine 70, cysteine 25-cysteine 117, cysteine 27-cysteine 43, cysteine 42-cysteine 98, cysteine 49-cysteine 91, cysteine 59-cysteine 84, and cysteine 77-cysteine 89.

The protein belongs to the phospholipase A2 family. Group I subfamily. A49 sub-subfamily. As to expression, expressed by the venom gland.

The protein localises to the secreted. Snake venom phospholipase A2 (PLA2) homolog that lacks both catalytic and neurotoxicity activities. The polypeptide is Acidic phospholipase A2 homolog (Bungarus fasciatus (Banded krait)).